The primary structure comprises 629 residues: Dual specificity tyrosine-phosphorylation-regulated kinase 1B (629 aa).

Y63 carries the phosphotyrosine modification. The disordered stretch occupies residues 67–86; sequence KKRRAQQAPPQDSSTKKEKK. The Bipartite nuclear localization signal signature appears at 69 to 86; the sequence is RRAQQAPPQDSSTKKEKK. Y92 and Y111 each carry phosphotyrosine. The 321-residue stretch at 111–431 folds into the Protein kinase domain; it reads YEIDSLIGKG…PLGALQHGFF (321 aa). Residue 117 to 125 coordinates ATP; sequence IGKGSFGQV. Y129 is modified (phosphotyrosine). Position 140 (K140) interacts with ATP. At Y171 the chain carries Phosphotyrosine. Position 190-193 (190-193) interacts with ATP; the sequence is FELL. The active-site Proton acceptor is D239. Phosphoserine is present on S262. Residue Y271 is modified to Phosphotyrosine; by autocatalysis. Y273 bears the Phosphotyrosine mark. The disordered stretch occupies residues 380–399; sequence GVQTGGPGGRRAGEPGHSPA. Y401 is subject to Phosphotyrosine. 2 disordered regions span residues 436 to 480 and 496 to 629; these read DEAT…SNDN and PITD…AASS. Residues 438–477 show a composition bias toward low complexity; the sequence is ATNTGPAGSSASTSPAPLDTCPSSSTASSISSSGGSSGSS. Residues 480–520 are interaction with RANBP9; sequence NRAYRYSNRYCGGPGPPITDCEMNSPQVLPSQPLRPWAGGD. Composition is skewed to pro residues over residues 552 to 562 and 574 to 585; these read PPSPTSPPPPE and DCSPPPPAPAPQ. At S624 the chain carries Phosphoserine.

It belongs to the protein kinase superfamily. CMGC Ser/Thr protein kinase family. MNB/DYRK subfamily. In terms of assembly, dimer. Interacts with DCOHM, MAP2K3/MKK3, RANBP9 and TCF1/HNF1A. Part of a complex consisting of RANBP9, RAN, DYRK1B and COPS5. Interacts with DCAF7. Interacts with RNF169. Phosphorylated by MAP kinase. Tyrosine phosphorylation may be required for dimerization. In terms of tissue distribution, isoform 1 and isoform 2 are broadly expressed. Isoform 3 seems specific for skeletal muscle (at protein level).

Its subcellular location is the nucleus. It localises to the nucleolus. The protein localises to the chromosome. The catalysed reaction is L-seryl-[protein] + ATP = O-phospho-L-seryl-[protein] + ADP + H(+). It catalyses the reaction L-threonyl-[protein] + ATP = O-phospho-L-threonyl-[protein] + ADP + H(+). It carries out the reaction L-tyrosyl-[protein] + ATP = O-phospho-L-tyrosyl-[protein] + ADP + H(+). Its activity is regulated as follows. Inhibited by RANBP9. Its function is as follows. Dual-specificity kinase which possesses both serine/threonine and tyrosine kinase activities. Plays an essential role in ribosomal DNA (rDNA) double-strand break repair and rDNA copy number maintenance. During DNA damage, mediates transcription silencing in part via phosphorylating and enforcing DSB accumulation of the histone methyltransferase EHMT2. Enhances the transcriptional activity of TCF1/HNF1A and FOXO1. Inhibits epithelial cell migration. Mediates colon carcinoma cell survival in mitogen-poor environments. Inhibits the SHH and WNT1 pathways, thereby enhancing adipogenesis. In addition, promotes expression of the gluconeogenic enzyme glucose-6-phosphatase catalytic subunit 1 (G6PC1). This Mus musculus (Mouse) protein is Dual specificity tyrosine-phosphorylation-regulated kinase 1B (Dyrk1b).